The primary structure comprises 470 residues: MTPFMTEDFLLDTEFARRLYHDYAKDQPIFDYHCHLPPQQIAEDYRFKNLYDIWLKGDHYKWRAMRTNGVAERLCTGDASDREKFDAWAATVPHTIGNPLYHWTHLELRRPFGITGKLLSPSTADEIWNECNELLAQDNFSARGIMQQMNVKMVGTTDDPIDSLEHHAEIAKDGSFTIKVLPSWRPDKAFNIEQATFNDYMAKLGEVSDTDIRRFADLQTALTKRLDHFAAHGCKVSDHALDVVMFAEANEAELDSILARRLAGEPLSEHEVAQFKTAVLVFLGAEYARRGWVQQYHIGALRNNNLRQFKLLGPDVGFDSINDRPMAEELSKLLSKQNEENLLPKTILYCLNPRDNEVLGTMIGNFQGEGMPGKMQFGSGWWFNDQKDGMERQMTQLAQLGLLSRFVGMLTDSRSFLSYTRHEYFRRILCQMIGRWVEAGEAPADINLLGEMVKNICFNNARDYFAIELN.

Belongs to the metallo-dependent hydrolases superfamily. Uronate isomerase family.

It carries out the reaction D-glucuronate = D-fructuronate. It catalyses the reaction aldehydo-D-galacturonate = keto-D-tagaturonate. The protein operates within carbohydrate metabolism; pentose and glucuronate interconversion. The chain is Uronate isomerase from Escherichia coli O8 (strain IAI1).